Consider the following 981-residue polypeptide: Colossin-C (981 aa).

Residues 1–23 (MKILYSLLLISSIILNTVLNISS) form the signal peptide. N63 carries an N-linked (GlcNAc...) asparagine glycan. A disordered region spans residues 172–195 (EQTQPPTQPPTQPPTQPPTPPPFT). The segment covering 177–194 (PTQPPTQPPTQPPTPPPF) has biased composition (pro residues). 3 N-linked (GlcNAc...) asparagine glycosylation sites follow: N222, N591, and N811.

Belongs to the serine-aspartate repeat-containing protein (SDr) family.

The protein localises to the secreted. This chain is Colossin-C (colC), found in Dictyostelium discoideum (Social amoeba).